Reading from the N-terminus, the 443-residue chain is Na(+)-translocating NADH-quinone reductase subunit A (443 aa).

Belongs to the NqrA family. Composed of six subunits; NqrA, NqrB, NqrC, NqrD, NqrE and NqrF.

The catalysed reaction is a ubiquinone + n Na(+)(in) + NADH + H(+) = a ubiquinol + n Na(+)(out) + NAD(+). Functionally, NQR complex catalyzes the reduction of ubiquinone-1 to ubiquinol by two successive reactions, coupled with the transport of Na(+) ions from the cytoplasm to the periplasm. NqrA to NqrE are probably involved in the second step, the conversion of ubisemiquinone to ubiquinol. The sequence is that of Na(+)-translocating NADH-quinone reductase subunit A from Actinobacillus succinogenes (strain ATCC 55618 / DSM 22257 / CCUG 43843 / 130Z).